The sequence spans 2462 residues: Piezo-type mechanosensitive ion channel homolog (2462 aa).

Transmembrane regions (helical) follow at residues 5–25 (LVGF…WSVI), 27–47 (FLDL…GYRF), 57–77 (IFIF…IWAA), 105–125 (TVMY…ADIY), 163–183 (AVQL…FFIG), 207–227 (LYIY…PINF), 248–268 (EGPD…LSYV), 325–345 (FFTY…FHFA), 347–367 (LCAF…PSLF), 374–394 (GLLL…NVAF), 404–424 (FGLG…FLYL), 467–487 (LIFL…IFFL), 502–522 (SLIL…IDLV), 554–574 (IALL…LFSF), 653–673 (VYLV…LLWI), 694–714 (AVLV…QLWL), 730–750 (APLL…QLYS), 792–812 (FYAS…GLVI), and 826–846 (SFLI…LWGM). The tract at residues 927 to 947 (ASVSSSNGENPSSTDHASISM) is disordered. The span at 928-939 (SVSSSNGENPSS) shows a compositional bias: low complexity. The next 8 membrane-spanning stretches (helical) occupy residues 1027 to 1047 (FWIE…ALLL), 1050 to 1070 (FALL…CVLL), 1078 to 1098 (LWPV…VATW), 1143 to 1160 (TLIS…KLRA), 1204 to 1224 (LYCY…TGTL), 1228 to 1248 (ILHL…LEIL), 1260 to 1280 (VYNF…VGNF), and 1310 to 1330 (SALV…MFSS). The stretch at 1347–1400 (AIVREQEKKAARKTEQLQQIREAEEKKRQRNLQVEKMKSEMLNLRVQLHRMNSD) forms a coiled coil. The interval 1543–1583 (SDTNEQSSVDDEVYDEMESQKRKHTPFERSTSLQSDRSSDG) is disordered. Positions 1550–1559 (SVDDEVYDEM) are enriched in acidic residues. A compositionally biased stretch (polar residues) spans 1570–1583 (ERSTSLQSDRSSDG). Transmembrane regions (helical) follow at residues 1611–1631 (FIIA…AALF), 1647–1667 (VIML…QIII), 1916–1936 (YIFG…QSVI), 1956–1976 (FVII…IYLC), 1984–2004 (VYYL…AWSI), 2012–2032 (AGLA…LQAI), 2130–2150 (GICL…MYSS), and 2369–2389 (FLGD…FVLA).

Belongs to the PIEZO (TC 1.A.75) family.

It is found in the membrane. In terms of biological role, pore-forming subunit of a mechanosensitive non-specific cation channel, that conducts both sodium and potassium ions. This Arabidopsis thaliana (Mouse-ear cress) protein is Piezo-type mechanosensitive ion channel homolog.